A 507-amino-acid polypeptide reads, in one-letter code: ATP synthase subunit alpha (507 aa).

Residues 118-141 are disordered; the sequence is VDGLGPIETTETRPIESPAPGVMD. Residue 172 to 179 coordinates ATP; the sequence is GDRQTGKT.

It belongs to the ATPase alpha/beta chains family. As to quaternary structure, F-type ATPases have 2 components, CF(1) - the catalytic core - and CF(0) - the membrane proton channel. CF(1) has five subunits: alpha(3), beta(3), gamma(1), delta(1), epsilon(1). CF(0) has three main subunits: a(1), b(2) and c(9-12). The alpha and beta chains form an alternating ring which encloses part of the gamma chain. CF(1) is attached to CF(0) by a central stalk formed by the gamma and epsilon chains, while a peripheral stalk is formed by the delta and b chains.

The protein resides in the cell membrane. The catalysed reaction is ATP + H2O + 4 H(+)(in) = ADP + phosphate + 5 H(+)(out). Its function is as follows. Produces ATP from ADP in the presence of a proton gradient across the membrane. The alpha chain is a regulatory subunit. The polypeptide is ATP synthase subunit alpha (Anoxybacillus flavithermus (strain DSM 21510 / WK1)).